A 438-amino-acid chain; its full sequence is GTPase Der (438 aa).

2 consecutive EngA-type G domains span residues 4 to 168 (PVVA…DDNS) and 177 to 352 (TKVC…NNYS). GTP is bound by residues 10 to 17 (GRANVGKS), 57 to 61 (DTGGL), 120 to 123 (NKID), 183 to 190 (GKPNVGKS), 230 to 234 (DTAGL), and 295 to 298 (NKWD). One can recognise a KH-like domain in the interval 353–437 (MRISTGVLND…PLQFEFKTRG (85 aa)).

It belongs to the TRAFAC class TrmE-Era-EngA-EngB-Septin-like GTPase superfamily. EngA (Der) GTPase family. Associates with the 50S ribosomal subunit.

Functionally, GTPase that plays an essential role in the late steps of ribosome biogenesis. In Finegoldia magna (strain ATCC 29328 / DSM 20472 / WAL 2508) (Peptostreptococcus magnus), this protein is GTPase Der.